We begin with the raw amino-acid sequence, 468 residues long: MNTQPNKLKLSLYNTLTRQKEIFEPAEPDRVTMYVCGPTVYNRSHIGNARPAVVFDVLARLLRRLYRHVVYARNITDIEDKIIAAAKEAGVDISVITEKYARIYREDMGALGVLAPDIEPKATESIAEMISMMERLIASGNAYAAEGHVLFNVPSFAEYGRLSGRDRDDMIAGARVEVAPYKKDPADFVLWKPSTPEQPGWDSPWGRGRPGWHIECSAMIEKHLGETIDIHGGGIDLQFPHHENELAQSSCAHGHTPLARFWLHNGFVNMGSEKMSKSLGNVLLVHELLAQAPGEAVRLALLNAHYRQPLDWSDEGLAQAKRMLDRLYGALRALSDVKAEPTNDAAPDAFMEALADDLNTPKALAVLFDLAKRANTETDPGTKAQLKAALIGAGRLLGVLEMDPEAWFAGAGAASHIDGEEVERLIAARNAARKAKDFAEADRIRGALAEMGVAIEDGPQGTSWRVAS.

Cysteine 36 serves as a coordination point for Zn(2+). A 'HIGH' region motif is present at residues 38–48; it reads PTVYNRSHIGN. 3 residues coordinate Zn(2+): cysteine 216, histidine 241, and glutamate 245. Residues 274–278 carry the 'KMSKS' region motif; that stretch reads KMSKS. Lysine 277 is a binding site for ATP.

This sequence belongs to the class-I aminoacyl-tRNA synthetase family. In terms of assembly, monomer. Zn(2+) is required as a cofactor.

The protein resides in the cytoplasm. The enzyme catalyses tRNA(Cys) + L-cysteine + ATP = L-cysteinyl-tRNA(Cys) + AMP + diphosphate. This Parvibaculum lavamentivorans (strain DS-1 / DSM 13023 / NCIMB 13966) protein is Cysteine--tRNA ligase.